Consider the following 153-residue polypeptide: Aspartate carbamoyltransferase regulatory chain (153 aa).

Zn(2+) contacts are provided by Cys-109, Cys-114, Cys-138, and Cys-141.

The protein belongs to the PyrI family. In terms of assembly, contains catalytic and regulatory chains. Zn(2+) is required as a cofactor.

Its function is as follows. Involved in allosteric regulation of aspartate carbamoyltransferase. This chain is Aspartate carbamoyltransferase regulatory chain, found in Salmonella newport (strain SL254).